The primary structure comprises 189 residues: NADH-ubiquinone oxidoreductase 20.9 kDa subunit (189 aa).

The chain crosses the membrane as a helical span at residues 73-88 (AMRLATAVGFFGGFLY).

Complex I is composed of about 40 different subunits. The N-terminus is blocked.

It localises to the mitochondrion inner membrane. It carries out the reaction a ubiquinone + NADH + 5 H(+)(in) = a ubiquinol + NAD(+) + 4 H(+)(out). Transfer of electrons from NADH to the respiratory chain. The immediate electron acceptor for the enzyme is believed to be ubiquinone. In Neurospora crassa (strain ATCC 24698 / 74-OR23-1A / CBS 708.71 / DSM 1257 / FGSC 987), this protein is NADH-ubiquinone oxidoreductase 20.9 kDa subunit (nuo20.9).